The following is an 85-amino-acid chain: MKVTLIAILTCAAVLVLHTTAAEELEAESQPMEVGMPDTELAAVDEERLFECSVSCEIEKEGNKDCKKKKCKGGWKCKFNMCVKV.

The first 22 residues, 1-22 (MKVTLIAILTCAAVLVLHTTAA), serve as a signal peptide directing secretion. Positions 23-48 (EELEAESQPMEVGMPDTELAAVDEER) are excised as a propeptide. 3 disulfides stabilise this stretch: C52/C66, C56/C77, and C71/C82.

It belongs to the neurotoxin 12 (Hwtx-2) family. 02 (Hwtx-2) subfamily. Monomer. Expressed by the venom gland.

The protein resides in the secreted. Its function is as follows. Neurotoxin active on both insects and mammals. In Cyriopagopus hainanus (Chinese bird spider), this protein is U4-theraphotoxin-Hhn1a.